Reading from the N-terminus, the 160-residue chain is Transmembrane protein 220 (160 aa).

5 helical membrane passes run Pro-3 to Val-23, Ala-30 to Asn-50, Ile-62 to Leu-82, Gly-100 to Gly-120, and Leu-125 to Asn-145.

It is found in the membrane. The chain is Transmembrane protein 220 (TMEM220) from Homo sapiens (Human).